Here is a 195-residue protein sequence, read N- to C-terminus: Interferon tau-1 (195 aa).

Residues 1–23 form the signal peptide; that stretch reads MAFVLSLLMALVLVSYGPGRSLG. 2 disulfides stabilise this stretch: cysteine 24-cysteine 122 and cysteine 52-cysteine 162. N-linked (GlcNAc...) asparagine glycosylation is present at asparagine 101.

It belongs to the alpha/beta interferon family. IFN-alphaII subfamily. Constitutively and exclusively expressed in the mononuclear cells of the extraembryonic trophectoderm.

Its subcellular location is the secreted. Functionally, paracrine hormone primarily responsible for maternal recognition of pregnancy. Interacts with endometrial receptors, probably type I interferon receptors, and blocks estrogen receptor expression, preventing the estrogen-induced increase in oxytocin receptor expression in the endometrium. This results in the suppression of the pulsatile endometrial release of the luteolytic hormone prostaglandin F2-alpha, hindering the regression of the corpus luteum (luteolysis) and therefore a return to ovarian cyclicity. This, and a possible direct effect of IFN-tau on prostaglandin synthesis, leads in turn to continued ovarian progesterone secretion, which stimulates the secretion by the endometrium of the nutrients required for the growth of the conceptus. In summary, displays particularly high antiviral and antiproliferative potency concurrently with particular weak cytotoxicity, high antiluteolytic activity and immunomodulatory properties. In contrast with other IFNs, IFN-tau is not virally inducible. This chain is Interferon tau-1 (IFNT1), found in Bos taurus (Bovine).